The primary structure comprises 849 residues: A-kinase anchor protein 4 (849 aa).

The propeptide occupies 1–188 (MIAYCGTTTM…MAASKNTNNN (188 aa)). A phosphoserine mark is found at serine 96, serine 130, serine 190, and serine 204. The segment covering 183–205 (KNTNNNQSPSNPATKSPSNQRSV) has biased composition (polar residues). Residues 183-210 (KNTNNNQSPSNPATKSPSNQRSVATPEG) are disordered. The residue at position 207 (threonine 207) is a Phosphothreonine. Serine 213, serine 226, and serine 271 each carry phosphoserine. The interval 219 to 232 (FYVNRLSSLVIQMA) is PKA-RI and PKA-RII subunit binding domain. Residue tyrosine 301 is modified to Phosphotyrosine. 9 positions are modified to phosphoserine: serine 302, serine 341, serine 431, serine 442, serine 444, serine 463, serine 492, serine 497, and serine 504. The interval 335 to 344 (YANQVASDMM) is PKA-RI-alpha subunit binding domain. Phosphothreonine is present on threonine 506. Serine 538 carries the post-translational modification Phosphoserine. Phosphoserine; by STK33 is present on serine 583. Phosphoserine occurs at positions 628, 633, 652, and 702.

This sequence belongs to the AKAP110 family. As to quaternary structure, interacts with PRKAR1A and PRKAR2A. Interacts with ENO4. Interacts with QRICH2. Phosphorylated by STK33 during sperm flagella assembly. In terms of tissue distribution, expressed in the fibrous sheath of spermatozoa (at protein level). Expressed in step 1 to step 6 spermatids, abundance then increases during steps 8 to 12, abundance decreases thereafter.

The protein localises to the cell projection. Its subcellular location is the cilium. It is found in the flagellum. In terms of biological role, major structural component of sperm fibrous sheath. Plays a role in sperm motility. This chain is A-kinase anchor protein 4, found in Mus musculus (Mouse).